The primary structure comprises 288 residues: Polyamine aminopropyltransferase (288 aa).

The PABS domain occupies 9–238 (ETLHDQFGQY…GIMTFAWATD (230 aa)). Glutamine 33 lines the S-methyl-5'-thioadenosine pocket. Histidine 64 and aspartate 88 together coordinate spermidine. S-methyl-5'-thioadenosine-binding positions include glutamate 108 and 140–141 (DG). The active-site Proton acceptor is the aspartate 158. A spermidine-binding site is contributed by 158-161 (DCTD). Proline 165 serves as a coordination point for S-methyl-5'-thioadenosine.

This sequence belongs to the spermidine/spermine synthase family. Homodimer or homotetramer.

Its subcellular location is the cytoplasm. It carries out the reaction S-adenosyl 3-(methylsulfanyl)propylamine + putrescine = S-methyl-5'-thioadenosine + spermidine + H(+). It participates in amine and polyamine biosynthesis; spermidine biosynthesis; spermidine from putrescine: step 1/1. Functionally, catalyzes the irreversible transfer of a propylamine group from the amino donor S-adenosylmethioninamine (decarboxy-AdoMet) to putrescine (1,4-diaminobutane) to yield spermidine. This is Polyamine aminopropyltransferase from Escherichia coli (strain ATCC 8739 / DSM 1576 / NBRC 3972 / NCIMB 8545 / WDCM 00012 / Crooks).